A 936-amino-acid chain; its full sequence is MTIPRIRQPRAVIDRKALTVVLEDLAATVTDNRERRARLLAVLKGALGDGRAEVRRRFLEEKGTGAAVFAENSHLMDQIIRLLFDFTTTHVYPRANRTIGEQMTVLAVGGYGRGEMSPQSDVDLLFLLPYKATPLHEQVVEYMLYTLWDMGLKVGHATRSIEECIRQARGDLTIRTAMLETRYLWGDRALYGQLKTKFWTGVVTGTGPDFVEAKLAERDERHLRMGDSRYVLEPNIKDGKGGLRDLHTLLWIARYIYGVSDMRELVELGVLSADAATKFGRARAFLWTVRCHLHYLADRPEERLTFDVQPAIAARMGYTDRNSGRGVERFMKHYFLMAKTVGDLTRIFCAVLEDQQKRRPILSIATLLMRKRNLGDFVLDGGRLAVAGRGAFREHPLQLISLFKVAHDHGLDIHPDTLRLVTEHLPTVTLLRNDAKANALFMEILTSRKDPELALRQLSESGVLARFIPDFGRVTAQMQFDMYHVYTTDEHTIRAIGLLHRLETGALRDRMPAAADAVHKVQSRRALYLAVLLHDIAKGRGGDHSILGAEVAMRLGPRLGMSEEETETVAWLVRHHLDMSRTAFKRDLDDIKTILDFTGLVQSVERLHLLLALTTVDILAVGPAVWNNWKSSLLRELYTHSKDVLTSGFQAEARDKRVAHKREELAAALADWPQASRERYLDLHYPAYWLTFDSATHLRHARMLRRARDAGLTVAVEVLPDPERAVSEVLVATDDHPGLFSKIAGAMALAGVNILDAKITTMSDGGALDIFTVQTLEGHAIEKEERIARLAKTVRDVLTGDLPLEKALRRQPPRLPERTRHLTVPPRVIVDNQASKTHTVIEINGRDRPGFLYAVTRALTDVAVQISSARVSTYGERVVDSFYVKDVFGMKIVHRAKLAQIREALEAAITQTVPRKVEEGAEQGAEKADAGEIVAA.

Residues 1 to 372 (MTIPRIRQPR…SIATLLMRKR (372 aa)) are uridylyltransferase. The uridylyl-removing stretch occupies residues 373-727 (NLGDFVLDGG…VLPDPERAVS (355 aa)). The 123-residue stretch at 488-610 (TDEHTIRAIG…VQSVERLHLL (123 aa)) folds into the HD domain. 2 ACT domains span residues 728–809 (EVLV…KALR) and 840–915 (VIEI…TVPR). Over residues 915 to 930 (RKVEEGAEQGAEKADA) the composition is skewed to basic and acidic residues. Residues 915–936 (RKVEEGAEQGAEKADAGEIVAA) are disordered.

It belongs to the GlnD family. Mg(2+) serves as cofactor.

It carries out the reaction [protein-PII]-L-tyrosine + UTP = [protein-PII]-uridylyl-L-tyrosine + diphosphate. The enzyme catalyses [protein-PII]-uridylyl-L-tyrosine + H2O = [protein-PII]-L-tyrosine + UMP + H(+). Its activity is regulated as follows. Uridylyltransferase (UTase) activity is inhibited by glutamine, while glutamine activates uridylyl-removing (UR) activity. Modifies, by uridylylation and deuridylylation, the PII regulatory proteins (GlnB and homologs), in response to the nitrogen status of the cell that GlnD senses through the glutamine level. Under low glutamine levels, catalyzes the conversion of the PII proteins and UTP to PII-UMP and PPi, while under higher glutamine levels, GlnD hydrolyzes PII-UMP to PII and UMP (deuridylylation). Thus, controls uridylylation state and activity of the PII proteins, and plays an important role in the regulation of nitrogen fixation and metabolism. The protein is Bifunctional uridylyltransferase/uridylyl-removing enzyme of Rhodospirillum rubrum (strain ATCC 11170 / ATH 1.1.1 / DSM 467 / LMG 4362 / NCIMB 8255 / S1).